The sequence spans 138 residues: Trypsin inhibitor DE5 alpha chain (138 aa).

The cysteines at positions 40 and 86 are disulfide-linked.

The protein belongs to the protease inhibitor I3 (leguminous Kunitz-type inhibitor) family. In terms of assembly, heterodimer of an alpha and a beta chain linked by a disulfide bond.

In terms of biological role, inhibition of trypsin. The sequence is that of Trypsin inhibitor DE5 alpha chain from Adenanthera pavonina (Sandal bead tree).